Consider the following 285-residue polypeptide: Inositol oxygenase (285 aa).

A disordered region spans residues 1–28; the sequence is MKVAADPDPSLVSQRDMEPEAAKDKDSF. Basic and acidic residues predominate over residues 15-28; it reads RDMEPEAAKDKDSF. Position 29 (Arg29) interacts with substrate. Ser33 bears the Phosphoserine mark. A substrate-binding site is contributed by 85–87; the sequence is DES. Residues His98, His123, and Asp124 each coordinate Fe cation. Substrate is bound by residues Lys127 and 141–142; that span reads GD. His194, His220, and Asp253 together coordinate Fe cation. 220-221 provides a ligand contact to substrate; the sequence is HS.

This sequence belongs to the myo-inositol oxygenase family. Fe cation is required as a cofactor.

Its subcellular location is the cytoplasm. The catalysed reaction is myo-inositol + O2 = D-glucuronate + H2O + H(+). The protein operates within polyol metabolism; myo-inositol degradation into D-glucuronate; D-glucuronate from myo-inositol: step 1/1. The protein is Inositol oxygenase (MIOX) of Bos taurus (Bovine).